Reading from the N-terminus, the 445-residue chain is 23S rRNA (uracil(1939)-C(5))-methyltransferase RlmD (445 aa).

Positions 12–70 (SKQLSSKLSLNVTQLDHLGAGIAHHQGKIVFINGALPGETVQVQLTEQKKKFSRAKLLK) constitute a TRAM domain. [4Fe-4S] cluster contacts are provided by C83, C89, C92, and C171. The S-adenosyl-L-methionine site is built by Q278, F307, N312, E328, D355, and D375. Residue C401 is the Nucleophile of the active site.

This sequence belongs to the class I-like SAM-binding methyltransferase superfamily. RNA M5U methyltransferase family. RlmD subfamily.

The enzyme catalyses uridine(1939) in 23S rRNA + S-adenosyl-L-methionine = 5-methyluridine(1939) in 23S rRNA + S-adenosyl-L-homocysteine + H(+). In terms of biological role, catalyzes the formation of 5-methyl-uridine at position 1939 (m5U1939) in 23S rRNA. This chain is 23S rRNA (uracil(1939)-C(5))-methyltransferase RlmD, found in Shewanella piezotolerans (strain WP3 / JCM 13877).